Reading from the N-terminus, the 173-residue chain is Crossover junction endodeoxyribonuclease RuvC (173 aa).

Residues aspartate 8, glutamate 67, and aspartate 139 contribute to the active site. Residues aspartate 8, glutamate 67, and aspartate 139 each contribute to the Mg(2+) site.

It belongs to the RuvC family. As to quaternary structure, homodimer which binds Holliday junction (HJ) DNA. The HJ becomes 2-fold symmetrical on binding to RuvC with unstacked arms; it has a different conformation from HJ DNA in complex with RuvA. In the full resolvosome a probable DNA-RuvA(4)-RuvB(12)-RuvC(2) complex forms which resolves the HJ. Mg(2+) serves as cofactor.

The protein localises to the cytoplasm. The enzyme catalyses Endonucleolytic cleavage at a junction such as a reciprocal single-stranded crossover between two homologous DNA duplexes (Holliday junction).. The RuvA-RuvB-RuvC complex processes Holliday junction (HJ) DNA during genetic recombination and DNA repair. Endonuclease that resolves HJ intermediates. Cleaves cruciform DNA by making single-stranded nicks across the HJ at symmetrical positions within the homologous arms, yielding a 5'-phosphate and a 3'-hydroxyl group; requires a central core of homology in the junction. The consensus cleavage sequence is 5'-(A/T)TT(C/G)-3'. Cleavage occurs on the 3'-side of the TT dinucleotide at the point of strand exchange. HJ branch migration catalyzed by RuvA-RuvB allows RuvC to scan DNA until it finds its consensus sequence, where it cleaves and resolves the cruciform DNA. The sequence is that of Crossover junction endodeoxyribonuclease RuvC from Shewanella baltica (strain OS223).